The primary structure comprises 146 residues: Ecotin-like protein 1 (146 aa).

The protein belongs to the protease inhibitor I11 (ecotin) family.

This Leishmania major protein is Ecotin-like protein 1 (ISP1).